Here is a 291-residue protein sequence, read N- to C-terminus: 4-hydroxybenzoate octaprenyltransferase (291 aa).

8 helical membrane-spanning segments follow: residues 23–43 (PIGT…AADG), 47–67 (PALV…GCAI), 98–118 (LAVA…LNAL), 139–159 (FFAI…PMAY), 171–191 (WLML…YAMV), 216–236 (IMLC…ALAL), 238–258 (AAYW…YTLL), and 267–287 (FFVF…AALA).

It belongs to the UbiA prenyltransferase family. The cofactor is Mg(2+).

It is found in the cell inner membrane. The catalysed reaction is all-trans-octaprenyl diphosphate + 4-hydroxybenzoate = 4-hydroxy-3-(all-trans-octaprenyl)benzoate + diphosphate. It functions in the pathway cofactor biosynthesis; ubiquinone biosynthesis. In terms of biological role, catalyzes the prenylation of para-hydroxybenzoate (PHB) with an all-trans polyprenyl group. Mediates the second step in the final reaction sequence of ubiquinone-8 (UQ-8) biosynthesis, which is the condensation of the polyisoprenoid side chain with PHB, generating the first membrane-bound Q intermediate 3-octaprenyl-4-hydroxybenzoate. This Ralstonia nicotianae (strain ATCC BAA-1114 / GMI1000) (Ralstonia solanacearum) protein is 4-hydroxybenzoate octaprenyltransferase.